The sequence spans 333 residues: Adenosine deaminase (333 aa).

His-12 and His-14 together coordinate Zn(2+). Residues His-14, Asp-16, and Gly-170 each contribute to the substrate site. A Zn(2+)-binding site is contributed by His-197. Residue Glu-200 is the Proton donor of the active site. Asp-278 contacts Zn(2+). Asp-279 provides a ligand contact to substrate.

Belongs to the metallo-dependent hydrolases superfamily. Adenosine and AMP deaminases family. Adenosine deaminase subfamily. Zn(2+) serves as cofactor.

The enzyme catalyses adenosine + H2O + H(+) = inosine + NH4(+). It carries out the reaction 2'-deoxyadenosine + H2O + H(+) = 2'-deoxyinosine + NH4(+). In terms of biological role, catalyzes the hydrolytic deamination of adenosine and 2-deoxyadenosine. The chain is Adenosine deaminase from Escherichia coli O45:K1 (strain S88 / ExPEC).